Here is a 205-residue protein sequence, read N- to C-terminus: Large ribosomal subunit protein bL17c (205 aa).

A chloroplast-targeting transit peptide spans 1 to 89; the sequence is MASASTTWSM…VIDNGGRVFA (89 aa).

It belongs to the bacterial ribosomal protein bL17 family. In terms of assembly, part of the 50S ribosomal subunit.

It localises to the plastid. The protein localises to the chloroplast. Functionally, this protein binds directly to 23S ribosomal RNA. This chain is Large ribosomal subunit protein bL17c (RPL17), found in Nicotiana tabacum (Common tobacco).